The following is a 335-amino-acid chain: MVLMGPHSALRLLPLKTQAIRFVLLLLLSVLILAVALLVTNARMPDPKVVRPLPDIGFEVFPKVGWLEHLTDVCIFILNFLSLLVVFKLYLLHRQNEGLDELQPFSCCPLIGKIIFGVWDSGRQSGIEKRDAHLIAWIRYFTTYFIVLLFRAIVVVMTSYPATDNHCQNPMKITNPVKNVIMTLVTFGSGSIHCGDLMFSGHTVSITLSLLVQWIYGSMLHWVFRPASVLLVLLSFYSIIASRSHYTDDILVSFYITVTTFLVLRHSPDGAPWQLQLLIGWWPCCVSNEETEDSDRNPTFVAVEVFLPHGDYQCAERISEEKTTVGPACGNFGHW.

Residues 1-21 (MVLMGPHSALRLLPLKTQAIR) lie on the Cytoplasmic side of the membrane. A helical membrane pass occupies residues 22 to 42 (FVLLLLLSVLILAVALLVTNA). At 43 to 72 (RMPDPKVVRPLPDIGFEVFPKVGWLEHLTD) the chain is on the extracellular side. The helical transmembrane segment at 73–93 (VCIFILNFLSLLVVFKLYLLH) threads the bilayer. At 94–98 (RQNEG) the chain is on the cytoplasmic side. Residues 99-119 (LDELQPFSCCPLIGKIIFGVW) traverse the membrane as a helical segment. The Extracellular portion of the chain corresponds to 120–139 (DSGRQSGIEKRDAHLIAWIR). Residues 140 to 160 (YFTTYFIVLLFRAIVVVMTSY) traverse the membrane as a helical segment. At 161–179 (PATDNHCQNPMKITNPVKN) the chain is on the cytoplasmic side. The helical transmembrane segment at 180–200 (VIMTLVTFGSGSIHCGDLMFS) threads the bilayer. Topologically, residues 201-203 (GHT) are extracellular. The active site involves histidine 202. The helical transmembrane segment at 204-224 (VSITLSLLVQWIYGSMLHWVF) threads the bilayer. The Cytoplasmic portion of the chain corresponds to 225–335 (RPASVLLVLL…GPACGNFGHW (111 aa)). Active-site residues include histidine 245 and aspartate 249.

The protein belongs to the sphingomyelin synthase family.

The protein resides in the membrane. In terms of biological role, bidirectional lipid inositolphosphotransferase capable of converting phosphatidylinositol (PI) and ceramide to inositol-phosphorylceramide (IPC) and diacylglycerol (DAG) and vice versa. Direction is dependent on the relative concentrations of DAG and ceramide as phosphoinositol acceptors. Essential for viability of the pathogenic bloodstream stage of this human protozoan parasite and, consequently, can be considered as potential drug target. The sequence is that of Phosphatidylinositol:ceramide inositolphosphotransferase from Trypanosoma cruzi (strain CL Brener).